Reading from the N-terminus, the 338-residue chain is Glutamyl-tRNA reductase (338 aa).

Substrate-binding positions include 50-53 (TCHR), Ser-102, 107-109 (ETE), and Gln-113. Cys-51 functions as the Nucleophile in the catalytic mechanism. NADP(+) is bound at residue 181 to 186 (GYSEIN).

It belongs to the glutamyl-tRNA reductase family. As to quaternary structure, homodimer.

The catalysed reaction is (S)-4-amino-5-oxopentanoate + tRNA(Glu) + NADP(+) = L-glutamyl-tRNA(Glu) + NADPH + H(+). It functions in the pathway porphyrin-containing compound metabolism; protoporphyrin-IX biosynthesis; 5-aminolevulinate from L-glutamyl-tRNA(Glu): step 1/2. Its function is as follows. Catalyzes the NADPH-dependent reduction of glutamyl-tRNA(Glu) to glutamate 1-semialdehyde (GSA). The polypeptide is Glutamyl-tRNA reductase (Chlamydia abortus (strain DSM 27085 / S26/3) (Chlamydophila abortus)).